A 303-amino-acid chain; its full sequence is Short chain dehydrogenase pigC (303 aa).

Positions 45, 103, 130, 164, 196, 200, and 231 each coordinate NADP(+). The Proton donor role is filled by Y196. Catalysis depends on K200, which acts as the Lowers pKa of active site Tyr.

Belongs to the short-chain dehydrogenases/reductases (SDR) family.

The protein operates within secondary metabolite biosynthesis. Short chain dehydrogenase; part of the gene cluster that mediates the biosynthesis of azaphilone pigments (MonAzPs), a complex mixture of compounds with a common azaphilone skeleton very widely used as food colorants. Within the pathway, pigC intercepts the very reactive benzaldehyde produced by the nrPKS pigA to reduce the omega-1 carbonyl to the alcohol to provide the first stable enzyme-free MonAzPs intermediate, 6-(4-hydroxy-2-oxopentyl)-3-methyl-2,4-dioxocyclohexane carbaldehyde, also known as M7PKS-1. The first step of the pathway is performed by the nrPKS pigA that forms the hexaketide precursor from successive condensations of five malonyl-CoA units, with a simple acetyl-CoA starter unit. The role of esterase pigG is not clear, but it may play at most a supplementary role in the formation of the benzaldehyde produced by the pigA nrPKS. This very reactive benzaldehyde is intercepted by the pigC ketoreductase that to provide the first stable enzyme-free MonAzPs intermediate, M7PKS-1. The FAD-dependent monooxygenase pigN hydroxylates M7PKS-1 at C-4, which triggers the formation of the pyran ring. PigJ, pigK and pigD are involved in the acetylation of the pyran ring. PigJ and pigK form the two subunits of a dedicated fungal FAS that produces the side chain fatty acyl moiety of MonAzPs and pigD transfers the fatty acyl chain to the C-4 alcohol. PigM and pigO are involved in the elimination of the omega-1 alcohol. PigM acts as an O-acetyltransferase that synthesizes the putative O-11 acetyl intermediate whereas pigO eliminates acetic acid to yield an intermediate with a C10(11) double bond. The dehydration of the C-11 alcohol followed by the reduction of the C6(7) double bond by the NAD(P)H-dependent oxidoreductase pigE increases the electrophilicity of the C-5 ketone of the resulting acyl benzopyran. This in turn sets up the C-5 ketone for an intramolecular Knoevenagel aldol condensation with the C-20 enol of the side chain. This condensation affords the characteristic linear tricyclic carbon skeletons of the yellow pigments that serve as the common precursors for the classical yellow pigments monascin and ankaflavin, orange pigments rubopunctatin and monascorubrin, and red pigments ribropunctamine and monascorubramine. The FAD-dependent oxidoreductase pigF is especially invoved in the biosynthesis of orange and red pigments via desaturation of C6(7). The polypeptide is Short chain dehydrogenase pigC (Monascus ruber (Mold)).